Here is an 842-residue protein sequence, read N- to C-terminus: Leucine--tRNA ligase (842 aa).

The 'HIGH' region motif lies at 44–55 (PYPSANGLHVGH). A 'KMSKS' region motif is present at residues 619–623 (KMSKS). ATP is bound at residue Lys-622.

Belongs to the class-I aminoacyl-tRNA synthetase family.

It is found in the cytoplasm. It carries out the reaction tRNA(Leu) + L-leucine + ATP = L-leucyl-tRNA(Leu) + AMP + diphosphate. This Borrelia hermsii (strain HS1 / DAH) protein is Leucine--tRNA ligase.